The sequence spans 63 residues: DNA-directed RNA polymerase 7 kDa subunit (63 aa).

It belongs to the poxviridae DNA-directed RNA polymerase 7 kDa subunit family. The DNA-dependent RNA polymerase used for intermediate and late genes expression consists of eight subunits 147 kDa, 133 kDa, 35 kDa, 30 kDa, 22 kDa, 19 kDa, 18 kDa and 7 kDa totalling more than 500 kDa in mass. The same holoenzyme, with the addition of the transcription-specificity factor RAP94, is used for early gene expression.

It is found in the virion. The catalysed reaction is RNA(n) + a ribonucleoside 5'-triphosphate = RNA(n+1) + diphosphate. Functionally, part of the DNA-dependent RNA polymerase which catalyzes the transcription of viral DNA into RNA using the four ribonucleoside triphosphates as substrates. Responsible for the transcription of early, intermediate and late genes. DNA-dependent RNA polymerase associates with the early transcription factor (ETF) thereby allowing the early genes transcription. Late transcription, and probably also intermediate transcription, require newly synthesized RNA polymerase. The protein is DNA-directed RNA polymerase 7 kDa subunit (RPO7) of Homo sapiens (Human).